A 379-amino-acid chain; its full sequence is Cytochrome b (379 aa).

A run of 4 helical transmembrane segments spans residues 33–53 (FGSL…FLAM), 77–98 (WMIR…FIHI), 113–133 (WNIG…GYVL), and 178–198 (FFAF…VHLL). Histidine 83 and histidine 97 together coordinate heme b. 2 residues coordinate heme b: histidine 182 and histidine 196. Histidine 201 lines the a ubiquinone pocket. Transmembrane regions (helical) follow at residues 226–246 (MKDI…VLFY), 288–308 (LGGV…PMMH), 320–340 (LSQC…WIGG), and 347–367 (FIMI…IIMP).

Belongs to the cytochrome b family. The cytochrome bc1 complex contains 11 subunits: 3 respiratory subunits (MT-CYB, CYC1 and UQCRFS1), 2 core proteins (UQCRC1 and UQCRC2) and 6 low-molecular weight proteins (UQCRH/QCR6, UQCRB/QCR7, UQCRQ/QCR8, UQCR10/QCR9, UQCR11/QCR10 and a cleavage product of UQCRFS1). This cytochrome bc1 complex then forms a dimer. Heme b serves as cofactor.

Its subcellular location is the mitochondrion inner membrane. Functionally, component of the ubiquinol-cytochrome c reductase complex (complex III or cytochrome b-c1 complex) that is part of the mitochondrial respiratory chain. The b-c1 complex mediates electron transfer from ubiquinol to cytochrome c. Contributes to the generation of a proton gradient across the mitochondrial membrane that is then used for ATP synthesis. The sequence is that of Cytochrome b (MT-CYB) from Massoutiera mzabi (Mzab gundi).